The following is a 204-amino-acid chain: Outer-membrane lipoprotein carrier protein (204 aa).

The signal sequence occupies residues 1–21 (MKKIAVTCALLSAFAVSSVWA). Residues 169-204 (QRSSYQLKSQQNGAVDMSKFTFTPPQGVTVDDQRNK) are disordered. Polar residues predominate over residues 171–181 (SSYQLKSQQNG).

This sequence belongs to the LolA family. In terms of assembly, monomer.

The protein resides in the periplasm. In terms of biological role, participates in the translocation of lipoproteins from the inner membrane to the outer membrane. Only forms a complex with a lipoprotein if the residue after the N-terminal Cys is not an aspartate (The Asp acts as a targeting signal to indicate that the lipoprotein should stay in the inner membrane). This Cronobacter sakazakii (strain ATCC BAA-894) (Enterobacter sakazakii) protein is Outer-membrane lipoprotein carrier protein.